We begin with the raw amino-acid sequence, 566 residues long: Endoglucanase G (566 aa).

An N-terminal signal peptide occupies residues 1–30 (MKKAKAIFSLVVALMVLAIFCFAQNTGSTA). Glu226 (proton donor) is an active-site residue. Glu381 serves as the catalytic Nucleophile. A disordered region spans residues 473-494 (GTPQASDPPATPTATPTKPAAS). Low complexity predominate over residues 474-494 (TPQASDPPATPTATPTKPAAS). A Dockerin domain is found at 497 to 564 (PSFIYGDINS…LLRSIDKLPH (68 aa)).

It belongs to the glycosyl hydrolase 5 (cellulase A) family.

The enzyme catalyses Endohydrolysis of (1-&gt;4)-beta-D-glucosidic linkages in cellulose, lichenin and cereal beta-D-glucans.. In terms of biological role, this enzyme catalyzes the endohydrolysis of 1,4-beta-glucosidic linkages in cellulose, lichenin and cereal beta-D-glucans. In Acetivibrio thermocellus (strain ATCC 27405 / DSM 1237 / JCM 9322 / NBRC 103400 / NCIMB 10682 / NRRL B-4536 / VPI 7372) (Clostridium thermocellum), this protein is Endoglucanase G (celG).